Consider the following 950-residue polypeptide: Leucine--tRNA ligase (950 aa).

The 'HIGH' region signature appears at 72-83 (PYPSGEGLHVGH). Positions 722 to 726 (KIGKS) match the 'KMSKS' region motif. Lysine 725 contacts ATP.

It belongs to the class-I aminoacyl-tRNA synthetase family.

The protein localises to the cytoplasm. It carries out the reaction tRNA(Leu) + L-leucine + ATP = L-leucyl-tRNA(Leu) + AMP + diphosphate. This Mycobacterium sp. (strain KMS) protein is Leucine--tRNA ligase.